The following is a 116-amino-acid chain: Large ribosomal subunit protein bL17 (116 aa).

The protein belongs to the bacterial ribosomal protein bL17 family. Part of the 50S ribosomal subunit. Contacts protein L32.

This chain is Large ribosomal subunit protein bL17, found in Prochlorococcus marinus (strain NATL2A).